Consider the following 127-residue polypeptide: Fluoride-specific ion channel FluC (127 aa).

4 helical membrane passes run Leu-8–Phe-28, Pro-37–Ile-57, Trp-68–Tyr-88, and Ile-100–Gly-120. Na(+) contacts are provided by Gly-78 and Thr-81.

This sequence belongs to the fluoride channel Fluc/FEX (TC 1.A.43) family.

It is found in the cell inner membrane. The catalysed reaction is fluoride(in) = fluoride(out). Na(+) is not transported, but it plays an essential structural role and its presence is essential for fluoride channel function. Functionally, fluoride-specific ion channel. Important for reducing fluoride concentration in the cell, thus reducing its toxicity. The chain is Fluoride-specific ion channel FluC from Leptospira interrogans serogroup Icterohaemorrhagiae serovar Lai (strain 56601).